A 58-amino-acid chain; its full sequence is MSTIKIKQVKSRIGAPADQKRVLDALGLRKMNRVVEHEATPSILGMVEKVKHLVAIVK.

This sequence belongs to the universal ribosomal protein uL30 family. As to quaternary structure, part of the 50S ribosomal subunit.

This chain is Large ribosomal subunit protein uL30, found in Phocaeicola vulgatus (strain ATCC 8482 / DSM 1447 / JCM 5826 / CCUG 4940 / NBRC 14291 / NCTC 11154) (Bacteroides vulgatus).